A 103-amino-acid polypeptide reads, in one-letter code: Small ribosomal subunit protein uS10 (103 aa).

Belongs to the universal ribosomal protein uS10 family. As to quaternary structure, part of the 30S ribosomal subunit.

Involved in the binding of tRNA to the ribosomes. This chain is Small ribosomal subunit protein uS10, found in Methylibium petroleiphilum (strain ATCC BAA-1232 / LMG 22953 / PM1).